Consider the following 99-residue polypeptide: UPF0473 protein SMU_2077c (99 aa).

Belongs to the UPF0473 family.

This Streptococcus mutans serotype c (strain ATCC 700610 / UA159) protein is UPF0473 protein SMU_2077c.